The primary structure comprises 441 residues: UDP-N-acetylglucosamine--N-acetylmuramyl-(pentapeptide) pyrophosphoryl-undecaprenol N-acetylglucosamine transferase (441 aa).

Residues 28–30, N140, R176, S204, I257, and Q302 each bind UDP-N-acetyl-alpha-D-glucosamine; that span reads TGG.

The protein belongs to the glycosyltransferase 28 family. MurG subfamily.

The protein resides in the cell inner membrane. It catalyses the reaction di-trans,octa-cis-undecaprenyl diphospho-N-acetyl-alpha-D-muramoyl-L-alanyl-D-glutamyl-meso-2,6-diaminopimeloyl-D-alanyl-D-alanine + UDP-N-acetyl-alpha-D-glucosamine = di-trans,octa-cis-undecaprenyl diphospho-[N-acetyl-alpha-D-glucosaminyl-(1-&gt;4)]-N-acetyl-alpha-D-muramoyl-L-alanyl-D-glutamyl-meso-2,6-diaminopimeloyl-D-alanyl-D-alanine + UDP + H(+). Its pathway is cell wall biogenesis; peptidoglycan biosynthesis. Cell wall formation. Catalyzes the transfer of a GlcNAc subunit on undecaprenyl-pyrophosphoryl-MurNAc-pentapeptide (lipid intermediate I) to form undecaprenyl-pyrophosphoryl-MurNAc-(pentapeptide)GlcNAc (lipid intermediate II). This chain is UDP-N-acetylglucosamine--N-acetylmuramyl-(pentapeptide) pyrophosphoryl-undecaprenol N-acetylglucosamine transferase, found in Xanthomonas oryzae pv. oryzae (strain MAFF 311018).